We begin with the raw amino-acid sequence, 60 residues long: MDHRLLEIIACPVCNGKLYFNQEKQELICKADRLAFPLRDGIPVLLENEARALTAEETNP.

This sequence belongs to the UPF0434 family.

In Cronobacter sakazakii (strain ATCC BAA-894) (Enterobacter sakazakii), this protein is UPF0434 protein ESA_02427.